A 234-amino-acid chain; its full sequence is Large ribosomal subunit protein uL1 (234 aa).

It belongs to the universal ribosomal protein uL1 family. As to quaternary structure, part of the 50S ribosomal subunit.

Functionally, binds directly to 23S rRNA. The L1 stalk is quite mobile in the ribosome, and is involved in E site tRNA release. In terms of biological role, protein L1 is also a translational repressor protein, it controls the translation of the L11 operon by binding to its mRNA. The chain is Large ribosomal subunit protein uL1 from Vibrio atlanticus (strain LGP32) (Vibrio splendidus (strain Mel32)).